A 254-amino-acid polypeptide reads, in one-letter code: tRNA uridine(34) hydroxylase (254 aa).

A Rhodanese domain is found at 123-217 (QDPNVILLDT…YLESIPESES (95 aa)). Cys-177 acts as the Cysteine persulfide intermediate in catalysis.

This sequence belongs to the TrhO family.

The catalysed reaction is uridine(34) in tRNA + AH2 + O2 = 5-hydroxyuridine(34) in tRNA + A + H2O. Its function is as follows. Catalyzes oxygen-dependent 5-hydroxyuridine (ho5U) modification at position 34 in tRNAs. The sequence is that of tRNA uridine(34) hydroxylase from Legionella pneumophila (strain Paris).